A 638-amino-acid chain; its full sequence is MAAQAGDDAWRCQGCGDYVAPNQRLYRTVSEAWPTSCFRCSECQDSLTNWYYEKDGKLYCHKDYWGKFGEFCHGCSLLMTGPVMVAGEFKYHPECFACMSCKVIIEDGDAYALVQHATLYCGKCHNEVVLAPMFERLSTESVQDQLPYSVTHISMPATTEGRRGFSVSVESACSNYATTVQVREVNRMHISPNNRNAIHPGDRILEINGAPVRTLRVEEVEDAISQTTQTLQLLIEHDPVSQRLDQLQLDARLSPCAQNDRHAHTLSPLDTKENLEGTLRRRSLRRSNSISKSPGPSSPKEPLLLSRDISRSESLRCSSSCSQQIFRPCDLIHGEVLGKGFFGQAIKVTHKATGKVMVMNELIRCDEETQKTFLTEVKVMRSLDHPNVLKFIGVLYKDKKLNLLTEYIEGGTLKDFLRNVDPFPWQQKVRFAKGIASGMAYLHSMCIIHRDLNSHNCLIKLDKTVVVADFGLSRLIVEERKKPPVEKATTKKRTLRKSDRKKRYTVVGNPYWMAPEMLNGKSYDETVDVFSFGIVLCEIIGQVYADPDCLPRTLDFGLNVKLFWEKFVPEECPPAFFPLAAICCRLEPESRPAFSKLEDFFEALSLYLGELGIPLPTELEDLDHTVSMEYGLIRNPPP.

2 LIM zinc-binding domains span residues 12 to 63 (CQGC…CHKD) and 72 to 124 (CHGC…CGKC). A PDZ domain is found at 152 to 239 (HISMPATTEG…TLQLLIEHDP (88 aa)). The disordered stretch occupies residues 280–304 (RRRSLRRSNSISKSPGPSSPKEPLL). Low complexity predominate over residues 286 to 304 (RSNSISKSPGPSSPKEPLL). A phosphoserine mark is found at Ser293 and Ser298. Positions 331–608 (LIHGEVLGKG…DFFEALSLYL (278 aa)) constitute a Protein kinase domain. ATP is bound by residues 337–345 (LGKGFFGQA) and Asn360. Asp451 is a catalytic residue. Thr505 is subject to Phosphothreonine; by ROCK1 and CDC42BP.

The protein belongs to the protein kinase superfamily. TKL Ser/Thr protein kinase family. Binds ROCK1 and MARF1. Interacts with NISCH. Post-translationally, phosphorylated on serine and/or threonine residues by ROCK1.

Its subcellular location is the cytoplasm. It is found in the cytoskeleton. The protein resides in the spindle. It localises to the microtubule organizing center. The protein localises to the centrosome. The enzyme catalyses L-seryl-[protein] + ATP = O-phospho-L-seryl-[protein] + ADP + H(+). It catalyses the reaction L-threonyl-[protein] + ATP = O-phospho-L-threonyl-[protein] + ADP + H(+). Serine/threonine-protein kinase that plays an essential role in the regulation of actin filament dynamics. Acts downstream of several Rho family GTPase signal transduction pathways. Involved in astral microtubule organization and mitotic spindle orientation during early stages of mitosis by mediating phosphorylation of TPPP. Displays serine/threonine-specific phosphorylation of myelin basic protein and histone (MBP) in vitro. Suppresses ciliogenesis via multiple pathways; phosphorylation of CFL1, suppression of directional trafficking of ciliary vesicles to the ciliary base, and by facilitating YAP1 nuclear localization where it acts as a transcriptional corepressor of the TEAD4 target genes AURKA and PLK1. This Bos taurus (Bovine) protein is LIM domain kinase 2 (LIMK2).